The following is a 150-amino-acid chain: uncharacterized protein (150 aa).

Residues 1 to 21 form the signal peptide; sequence MAMEMAMMGLLGTVVGASAMG.

This is an uncharacterized protein from Mycobacterium tuberculosis (strain CDC 1551 / Oshkosh).